Here is a 449-residue protein sequence, read N- to C-terminus: Kynurenine 3-monooxygenase (449 aa).

It belongs to the aromatic-ring hydroxylase family. KMO subfamily. FAD is required as a cofactor.

It catalyses the reaction L-kynurenine + NADPH + O2 + H(+) = 3-hydroxy-L-kynurenine + NADP(+) + H2O. Its pathway is cofactor biosynthesis; NAD(+) biosynthesis; quinolinate from L-kynurenine: step 1/3. Catalyzes the hydroxylation of L-kynurenine (L-Kyn) to form 3-hydroxy-L-kynurenine (L-3OHKyn). Required for synthesis of quinolinic acid. The chain is Kynurenine 3-monooxygenase from Legionella pneumophila (strain Lens).